Reading from the N-terminus, the 188-residue chain is Threonylcarbamoyl-AMP synthase (188 aa).

In terms of domain architecture, YrdC-like spans 4–188 (VENLQQAVDA…ARSLQVLRQG (185 aa)).

It belongs to the SUA5 family. TsaC subfamily.

The protein localises to the cytoplasm. The enzyme catalyses L-threonine + hydrogencarbonate + ATP = L-threonylcarbamoyladenylate + diphosphate + H2O. Required for the formation of a threonylcarbamoyl group on adenosine at position 37 (t(6)A37) in tRNAs that read codons beginning with adenine. Catalyzes the conversion of L-threonine, HCO(3)(-)/CO(2) and ATP to give threonylcarbamoyl-AMP (TC-AMP) as the acyladenylate intermediate, with the release of diphosphate. The protein is Threonylcarbamoyl-AMP synthase of Vibrio cholerae serotype O1 (strain ATCC 39541 / Classical Ogawa 395 / O395).